Consider the following 196-residue polypeptide: ATP-dependent Clp protease proteolytic subunit (196 aa).

The active-site Nucleophile is S96. Residue H121 is part of the active site.

The protein belongs to the peptidase S14 family. As to quaternary structure, fourteen ClpP subunits assemble into 2 heptameric rings which stack back to back to give a disk-like structure with a central cavity, resembling the structure of eukaryotic proteasomes.

It is found in the cytoplasm. The enzyme catalyses Hydrolysis of proteins to small peptides in the presence of ATP and magnesium. alpha-casein is the usual test substrate. In the absence of ATP, only oligopeptides shorter than five residues are hydrolyzed (such as succinyl-Leu-Tyr-|-NHMec, and Leu-Tyr-Leu-|-Tyr-Trp, in which cleavage of the -Tyr-|-Leu- and -Tyr-|-Trp bonds also occurs).. Cleaves peptides in various proteins in a process that requires ATP hydrolysis. Has a chymotrypsin-like activity. Plays a major role in the degradation of misfolded proteins. This Streptococcus uberis (strain ATCC BAA-854 / 0140J) protein is ATP-dependent Clp protease proteolytic subunit.